We begin with the raw amino-acid sequence, 315 residues long: Olfactory receptor 5M1 (315 aa).

Residues 1 to 25 are Extracellular-facing; sequence MFSPNHTIVTEFILLGLTDDPVLEK. The N-linked (GlcNAc...) asparagine glycan is linked to Asn-5. A helical transmembrane segment spans residues 26–46; that stretch reads ILFGVFLAIYLITLAGNLCMI. The Cytoplasmic segment spans residues 47–54; that stretch reads LLIRTNSH. A helical transmembrane segment spans residues 55–75; it reads LQTPMYFFLGHLSFVDICYSS. The Extracellular segment spans residues 76–99; the sequence is NVTPNMLHNFLSEQKTISYAGCFT. A disulfide bridge links Cys-97 with Cys-189. The chain crosses the membrane as a helical span at residues 100-120; sequence QCLLFIALVITEFYILASMAL. At 121 to 139 the chain is on the cytoplasmic side; that stretch reads DRYVAICSPLHYSSRMSKN. Residues 140–160 form a helical membrane-spanning segment; the sequence is ICVCLVTIPYMYGFLSGFSQS. Residues 161–196 are Extracellular-facing; that stretch reads LLTFHLSFCGSLEINHFYCADPPLIMLACSDTRVKK. Residues 197 to 217 form a helical membrane-spanning segment; that stretch reads MAMFVVAGFNLSSSLFIILLS. Over 218–237 the chain is Cytoplasmic; sequence YLFIFAAIFRIRSAEGRHKA. The chain crosses the membrane as a helical span at residues 238–258; sequence FSTCASHLTIVTLFYGTLFCM. Residues 259-271 are Extracellular-facing; it reads YVRPPSEKSVEES. The helical transmembrane segment at 272-292 threads the bilayer; it reads KITAVFYTFLSPMLNPLIYSL. Residues 293–315 lie on the Cytoplasmic side of the membrane; that stretch reads RNTDVILAMQQMIRGKSFHKIAV.

Belongs to the G-protein coupled receptor 1 family.

It localises to the cell membrane. Its function is as follows. Odorant receptor. In Homo sapiens (Human), this protein is Olfactory receptor 5M1 (OR5M1).